Consider the following 435-residue polypeptide: Serine--tRNA ligase (435 aa).

An L-serine-binding site is contributed by 233 to 235; it reads TAE. 264-266 serves as a coordination point for ATP; the sequence is RAE. Glu-287 contacts L-serine. 351–354 serves as a coordination point for ATP; sequence EISS. Position 386 (Ser-386) interacts with L-serine.

The protein belongs to the class-II aminoacyl-tRNA synthetase family. Type-1 seryl-tRNA synthetase subfamily. Homodimer. The tRNA molecule binds across the dimer.

It localises to the cytoplasm. It catalyses the reaction tRNA(Ser) + L-serine + ATP = L-seryl-tRNA(Ser) + AMP + diphosphate + H(+). The enzyme catalyses tRNA(Sec) + L-serine + ATP = L-seryl-tRNA(Sec) + AMP + diphosphate + H(+). It participates in aminoacyl-tRNA biosynthesis; selenocysteinyl-tRNA(Sec) biosynthesis; L-seryl-tRNA(Sec) from L-serine and tRNA(Sec): step 1/1. Functionally, catalyzes the attachment of serine to tRNA(Ser). Is also able to aminoacylate tRNA(Sec) with serine, to form the misacylated tRNA L-seryl-tRNA(Sec), which will be further converted into selenocysteinyl-tRNA(Sec). This chain is Serine--tRNA ligase, found in Anaeromyxobacter sp. (strain K).